A 524-amino-acid polypeptide reads, in one-letter code: Alkaline phosphatase, tissue-nonspecific isozyme (524 aa).

Residues 1-17 (MISPFLLLAIGTCFASS) form the signal peptide. A Mg(2+)-binding site is contributed by Asp60. Zn(2+)-binding residues include Asp60 and Ser110. The active-site Phosphoserine intermediate is the Ser110. The residue at position 110 (Ser110) is a Phosphoserine. Residues Cys139 and Cys201 are joined by a disulfide bond. Asn140 is a glycosylation site (N-linked (GlcNAc...) asparagine). A Mg(2+)-binding site is contributed by Thr173. N-linked (GlcNAc...) asparagine glycosylation is present at Asn230. Glu235 is a binding site for Ca(2+). An N-linked (GlcNAc...) asparagine glycan is attached at Asn271. Residues Phe290 and Glu291 each contribute to the Ca(2+) site. Asn303 carries N-linked (GlcNAc...) asparagine glycosylation. Asp306 contributes to the Ca(2+) binding site. Glu332 serves as a coordination point for Mg(2+). Positions 337, 341, 378, and 379 each coordinate Zn(2+). Asn430 carries N-linked (GlcNAc...) asparagine glycosylation. His454 is a Zn(2+) binding site. Cys489 and Cys497 are disulfide-bonded. Ser499 is lipidated: GPI-anchor amidated serine. Positions 500 to 524 (ASSSGSPSPGPLLLLLALLPLGSLF) are cleaved as a propeptide — removed in mature form.

It belongs to the alkaline phosphatase family. As to quaternary structure, homodimer. It depends on Mg(2+) as a cofactor. Requires Zn(2+) as cofactor. The cofactor is Ca(2+). N-glycosylated.

It localises to the cell membrane. Its subcellular location is the extracellular vesicle membrane. The protein resides in the mitochondrion membrane. It is found in the mitochondrion intermembrane space. It carries out the reaction a phosphate monoester + H2O = an alcohol + phosphate. The catalysed reaction is diphosphate + H2O = 2 phosphate + H(+). The enzyme catalyses pyridoxal 5'-phosphate + H2O = pyridoxal + phosphate. It catalyses the reaction phosphoethanolamine + H2O = ethanolamine + phosphate. It carries out the reaction N-phosphocreatine + H2O = creatine + phosphate. The catalysed reaction is ATP + H2O = ADP + phosphate + H(+). The enzyme catalyses ADP + H2O = AMP + phosphate + H(+). It catalyses the reaction AMP + H2O = adenosine + phosphate. Phosphatase activity is specifically inhibited by 5-((5-chloro-2-methoxyphenyl)sulfonamido)nicotinamide (SBI-425). Functionally, alkaline phosphatase that metabolizes various phosphate compounds and plays a key role in skeletal mineralization and adaptive thermogenesis. Has broad substrate specificity and can hydrolyze a considerable variety of compounds: however, only a few substrates, such as diphosphate (inorganic pyrophosphate; PPi), pyridoxal 5'-phosphate (PLP) and N-phosphocreatine are natural substrates. Plays an essential role in skeletal and dental mineralization via its ability to hydrolyze extracellular diphosphate, a potent mineralization inhibitor, to phosphate: it thereby promotes hydroxyapatite crystal formation and increases inorganic phosphate concentration. Acts in a non-redundant manner with PHOSPHO1 in skeletal mineralization: while PHOSPHO1 mediates the initiation of hydroxyapatite crystallization in the matrix vesicles (MVs), ALPL/TNAP catalyzes the spread of hydroxyapatite crystallization in the extracellular matrix. Also promotes dephosphorylation of osteopontin (SSP1), an inhibitor of hydroxyapatite crystallization in its phosphorylated state; it is however unclear whether ALPL/TNAP mediates SSP1 dephosphorylation via a direct or indirect manner. Catalyzes dephosphorylation of PLP to pyridoxal (PL), the transportable form of vitamin B6, in order to provide a sufficient amount of PLP in the brain, an essential cofactor for enzymes catalyzing the synthesis of diverse neurotransmitters. Additionally, also able to mediate ATP degradation in a stepwise manner to adenosine, thereby regulating the availability of ligands for purinergic receptors. Also capable of dephosphorylating microbial products, such as lipopolysaccharides (LPS) as well as other phosphorylated small-molecules, such as poly-inosine:cytosine (poly I:C). Acts as a key regulator of adaptive thermogenesis as part of the futile creatine cycle: localizes to the mitochondria of thermogenic fat cells and acts by mediating hydrolysis of N-phosphocreatine to initiate a futile cycle of creatine dephosphorylation and phosphorylation. During the futile creatine cycle, creatine and N-phosphocreatine are in a futile cycle, which dissipates the high energy charge of N-phosphocreatine as heat without performing any mechanical or chemical work. This Bos taurus (Bovine) protein is Alkaline phosphatase, tissue-nonspecific isozyme (ALPL).